The chain runs to 192 residues: Molybdenum cofactor guanylyltransferase (192 aa).

Positions 21, 67, and 101 each coordinate GTP. Aspartate 101 contributes to the Mg(2+) binding site.

The protein belongs to the MobA family. In terms of assembly, monomer. Mg(2+) serves as cofactor.

The protein localises to the cytoplasm. It carries out the reaction Mo-molybdopterin + GTP + H(+) = Mo-molybdopterin guanine dinucleotide + diphosphate. Transfers a GMP moiety from GTP to Mo-molybdopterin (Mo-MPT) cofactor (Moco or molybdenum cofactor) to form Mo-molybdopterin guanine dinucleotide (Mo-MGD) cofactor. The protein is Molybdenum cofactor guanylyltransferase of Neisseria meningitidis serogroup C / serotype 2a (strain ATCC 700532 / DSM 15464 / FAM18).